A 177-amino-acid chain; its full sequence is PRELI domain-containing protein 2 (177 aa).

The region spanning 1 to 175 is the PRELI/MSF1 domain; it reads MGVTVDVHQV…LLKEQCGSPL (175 aa).

The chain is PRELI domain-containing protein 2 (Prelid2) from Mus musculus (Mouse).